The sequence spans 1088 residues: RNA-directed RNA polymerase (1088 aa).

The RdRp catalytic domain occupies 501–687 (LSYGDVTRFL…AKRYIAGGKI (187 aa)).

This sequence belongs to the reoviridae RNA-directed RNA polymerase family. Interacts with VP3 (Potential). Interacts with VP2; this interaction activates VP1. Interacts with NSP5; this interaction is probably necessary for the formation of functional virus factories. Interacts with NSP2; this interaction is weak. Requires Mg(2+) as cofactor.

It localises to the virion. It carries out the reaction RNA(n) + a ribonucleoside 5'-triphosphate = RNA(n+1) + diphosphate. In terms of biological role, RNA-directed RNA polymerase that is involved in both transcription and genome replication. Together with VP3 capping enzyme, forms an enzyme complex positioned near the channels situated at each of the five-fold vertices of the core. Following infection, the outermost layer of the virus is lost, leaving a double-layered particle (DLP) made up of the core and VP6 shell. VP1 then catalyzes the transcription of fully conservative plus-strand genomic RNAs that are extruded through the DLP's channels into the cytoplasm where they function as mRNAs for translation of viral proteins. One copy of each of the viral (+)RNAs is also recruited during core assembly, together with newly synthesized polymerase complexes and VP2. The polymerase of these novo-formed particles catalyzes the synthesis of complementary minus-strands leading to dsRNA formation. To do so, the polymerase specifically recognizes and binds 4 bases 5'-UGUG-3' in the conserved 3'-sequence of plus-strand RNA templates. VP2 presumably activates the autoinhibited VP1-RNA complex to coordinate packaging and genome replication. Once dsRNA synthesis is complete, the polymerase switches to the transcriptional mode, thus providing secondary transcription. In Sus scrofa (Pig), this protein is RNA-directed RNA polymerase.